Consider the following 190-residue polypeptide: MAEEQKTSKVDVESPAVLAPAKEPTPAPVEVADEKIHNPPPVESKALAVVEKPIEEHTPKKASSGSADRDVILADLEKEKKTSFIKAWEESEKSKAENRAQKKISDVHAWENSKKAAVEAQLRKIEEKLEKKKAQYGEKMKNKVAAIHKLAEEKRAMVEAKKGEELLKAEEMGAKYRATGVVPKATCGCF.

Basic and acidic residues predominate over residues 1–12 (MAEEQKTSKVDV). Disordered stretches follow at residues 1 to 45 (MAEE…VESK) and 50 to 69 (VEKPIEEHTPKKASSGSADR). S14 carries the post-translational modification Phosphoserine. T58 carries the post-translational modification Phosphothreonine. A coiled-coil region spans residues 92–147 (EKSKAENRAQKKISDVHAWENSKKAAVEAQLRKIEEKLEKKKAQYGEKMKNKVAAI).

The protein belongs to the remorin family. As to quaternary structure, may polymerize to form filamentous structures. Expressed in roots, leaves, stems, flowers and siliques, with a maximal expression in apical regions.

Its function is as follows. Exhibits a non sequence-specific DNA-binding activity. The sequence is that of Remorin (DBP) from Arabidopsis thaliana (Mouse-ear cress).